Reading from the N-terminus, the 240-residue chain is Ubiquinone biosynthesis O-methyltransferase (240 aa).

Arginine 44, glycine 64, aspartate 85, and methionine 129 together coordinate S-adenosyl-L-methionine.

Belongs to the methyltransferase superfamily. UbiG/COQ3 family.

It carries out the reaction a 3-demethylubiquinol + S-adenosyl-L-methionine = a ubiquinol + S-adenosyl-L-homocysteine + H(+). It catalyses the reaction a 3-(all-trans-polyprenyl)benzene-1,2-diol + S-adenosyl-L-methionine = a 2-methoxy-6-(all-trans-polyprenyl)phenol + S-adenosyl-L-homocysteine + H(+). Its pathway is cofactor biosynthesis; ubiquinone biosynthesis. In terms of biological role, O-methyltransferase that catalyzes the 2 O-methylation steps in the ubiquinone biosynthetic pathway. The chain is Ubiquinone biosynthesis O-methyltransferase from Escherichia coli O6:H1 (strain CFT073 / ATCC 700928 / UPEC).